A 406-amino-acid chain; its full sequence is FBD-associated F-box protein At1g60410 (406 aa).

Residues 9–59 (KDRLSDLPCHLLCRILSNLSTKESVRTSVLSPRWSNLWSLVSVLDLDFQDF) enclose the F-box domain. Positions 355 to 405 (MEEIKLSPVPQCVLSSLDFLQLKAPSTPSKMKLATYFRKKCTRLTKMLLSG) constitute an FBD domain.

The chain is FBD-associated F-box protein At1g60410 from Arabidopsis thaliana (Mouse-ear cress).